Reading from the N-terminus, the 446-residue chain is Putative diacyglycerol O-acyltransferase Rv3371 (446 aa).

The active-site Proton acceptor is the His129. Residues 425-446 (SRALPSAARRGRPSVPTARARH) form a disordered region.

The protein belongs to the long-chain O-acyltransferase family.

The catalysed reaction is an acyl-CoA + a 1,2-diacyl-sn-glycerol = a triacyl-sn-glycerol + CoA. The enzyme catalyses di-(9Z)-octadecenoylglycerol + (9Z)-octadecenoyl-CoA = 1,2,3-tri-(9Z-octadecenoyl)-glycerol + CoA. It participates in glycerolipid metabolism; triacylglycerol biosynthesis. Functionally, catalyzes the terminal and only committed step in triacylglycerol synthesis by using diacylglycerol and fatty acyl CoA as substrates. Required for storage lipid synthesis. Upon expression in E.coli functions weakly as a triacylglycerol synthase, making triacylglycerol (TG) from diolein and long-chain fatty acyl-CoA. Has no wax synthase activity to produce wax esters. The sequence is that of Putative diacyglycerol O-acyltransferase Rv3371 from Mycobacterium tuberculosis (strain ATCC 25618 / H37Rv).